A 258-amino-acid polypeptide reads, in one-letter code: 5'-nucleotidase SurE (258 aa).

A divalent metal cation-binding residues include aspartate 16, aspartate 17, serine 47, and asparagine 99.

The protein belongs to the SurE nucleotidase family. A divalent metal cation serves as cofactor.

Its subcellular location is the cytoplasm. It catalyses the reaction a ribonucleoside 5'-phosphate + H2O = a ribonucleoside + phosphate. Its function is as follows. Nucleotidase that shows phosphatase activity on nucleoside 5'-monophosphates. This is 5'-nucleotidase SurE from Coxiella burnetii (strain CbuK_Q154) (Coxiella burnetii (strain Q154)).